The chain runs to 473 residues: PEP-dependent dihydroxyacetone kinase, phosphoryl donor subunit DhaM (473 aa).

Residues 1–137 (MVNLVIVSHS…LAAKQAQLGI (137 aa)) enclose the PTS EIIA type-4 domain. The active-site Tele-phosphohistidine intermediate is H9. Residues 155–242 (ARSVTVTIRN…SLAAEDFGEH (88 aa)) enclose the HPr domain. Catalysis depends on H169, which acts as the Pros-phosphohistidine intermediate. The interval 266 to 472 (PLPLAQPARH…IDPAAQRVSC (207 aa)) is PTS EI-like, N-terminal part. Residue H432 is the Tele-phosphohistidine intermediate of the active site.

Belongs to the PEP-utilizing enzyme family. In terms of assembly, homodimer. The dihydroxyacetone kinase complex is composed of a homodimer of DhaM, a homodimer of DhaK and the subunit DhaL.

It carries out the reaction dihydroxyacetone + phosphoenolpyruvate = dihydroxyacetone phosphate + pyruvate. In terms of biological role, component of the dihydroxyacetone kinase complex, which is responsible for the phosphoenolpyruvate (PEP)-dependent phosphorylation of dihydroxyacetone. DhaM serves as the phosphoryl donor. Is phosphorylated by phosphoenolpyruvate in an EI- and HPr-dependent reaction, and a phosphorelay system on histidine residues finally leads to phosphoryl transfer to DhaL and dihydroxyacetone. In Pantoea ananatis (strain LMG 20103), this protein is PEP-dependent dihydroxyacetone kinase, phosphoryl donor subunit DhaM.